Consider the following 323-residue polypeptide: Transcription factor MafB (323 aa).

A Glycyl lysine isopeptide (Lys-Gly) (interchain with G-Cter in SUMO) cross-link involves residue Lys32. The segment covering 34-43 (EPLGRAERPG) has biased composition (basic and acidic residues). 2 disordered regions span residues 34–78 (EPLG…PTEP) and 116–210 (PVPQ…VEDR). The span at 54 to 77 (SVSSTPLSTPCSSVPSSPSFSPTE) shows a compositional bias: low complexity. 2 stretches are compositionally biased toward basic residues: residues 129-143 (SAHH…HPHH) and 159-168 (AHPHHHHHHQ). Over residues 192-201 (PHATAAATAA) the composition is skewed to low complexity. Residues 238–263 (RLKQKRRTLKNRGYAQSCRYKRVQQK) are basic motif. The region spanning 238-301 (RLKQKRRTLK…DAYKVKCEKL (64 aa)) is the bZIP domain. Positions 266-287 (LENEKTQLIQQVEQLKQEVSRL) are leucine-zipper. Residue Lys297 forms a Glycyl lysine isopeptide (Lys-Gly) (interchain with G-Cter in SUMO) linkage.

The protein belongs to the bZIP family. Maf subfamily. Homodimer or heterodimer with other bHLH-Zip transcription factors. Forms homodimers and heterodimers with FOS, FOSB and FOSL2, but not with JUN proteins (JUN, JUNB and JUND). Interacts with the intracellular cytoplasmic domain of LRP1 (LRPICD); the interaction results in a moderate reduction of MAFB transcriptional potential. Binds DNA as a homodimer or a heterodimer. Interacts with PAX6; the interaction is direct. Interacts with ETS1 and LRP1. In terms of processing, sumoylated. Sumoylation on Lys-32 and Lys-297 stimulates its transcriptional repression activity and promotes macrophage differentiation from myeloid progenitors. In terms of tissue distribution, expressed in pancreatic alpha-cells (glucagon-positive cells), in podocytes of the kidney and macrophages (at protein level). Most abundant in kidney, gut, lung and brain.

It is found in the nucleus. Acts as a transcriptional activator or repressor. Plays a pivotal role in regulating lineage-specific hematopoiesis by repressing ETS1-mediated transcription of erythroid-specific genes in myeloid cells. Required for monocytic, macrophage, osteoclast, podocyte and islet beta cell differentiation. Involved in renal tubule survival and F4/80 maturation. Activates the insulin and glucagon promoters. Together with PAX6, transactivates weakly the glucagon gene promoter through the G1 element. SUMO modification controls its transcriptional activity and ability to specify macrophage fate. Binds element G1 on the glucagon promoter. Involved either as an oncogene or as a tumor suppressor, depending on the cell context. Required for the transcriptional activation of HOXB3 in the rhombomere r5 in the hindbrain. The chain is Transcription factor MafB (Mafb) from Mus musculus (Mouse).